A 306-amino-acid chain; its full sequence is UDP-3-O-acyl-N-acetylglucosamine deacetylase (306 aa).

Residues His-79, His-238, and Asp-242 each coordinate Zn(2+). Residue His-265 is the Proton donor of the active site.

This sequence belongs to the LpxC family. Zn(2+) serves as cofactor.

It catalyses the reaction a UDP-3-O-[(3R)-3-hydroxyacyl]-N-acetyl-alpha-D-glucosamine + H2O = a UDP-3-O-[(3R)-3-hydroxyacyl]-alpha-D-glucosamine + acetate. It participates in glycolipid biosynthesis; lipid IV(A) biosynthesis; lipid IV(A) from (3R)-3-hydroxytetradecanoyl-[acyl-carrier-protein] and UDP-N-acetyl-alpha-D-glucosamine: step 2/6. Functionally, catalyzes the hydrolysis of UDP-3-O-myristoyl-N-acetylglucosamine to form UDP-3-O-myristoylglucosamine and acetate, the committed step in lipid A biosynthesis. This Shewanella halifaxensis (strain HAW-EB4) protein is UDP-3-O-acyl-N-acetylglucosamine deacetylase.